Here is a 355-residue protein sequence, read N- to C-terminus: 3-dehydroquinate synthase (355 aa).

Residues 71–76 (EGEASK), 105–109 (GVVGD), 129–130 (TS), Lys142, and Lys151 each bind NAD(+). 3 residues coordinate Zn(2+): Glu184, His246, and His263.

It belongs to the sugar phosphate cyclases superfamily. Dehydroquinate synthase family. Co(2+) serves as cofactor. Requires Zn(2+) as cofactor. It depends on NAD(+) as a cofactor.

The protein localises to the cytoplasm. The catalysed reaction is 7-phospho-2-dehydro-3-deoxy-D-arabino-heptonate = 3-dehydroquinate + phosphate. It participates in metabolic intermediate biosynthesis; chorismate biosynthesis; chorismate from D-erythrose 4-phosphate and phosphoenolpyruvate: step 2/7. In terms of biological role, catalyzes the conversion of 3-deoxy-D-arabino-heptulosonate 7-phosphate (DAHP) to dehydroquinate (DHQ). The polypeptide is 3-dehydroquinate synthase (Streptococcus gordonii (strain Challis / ATCC 35105 / BCRC 15272 / CH1 / DL1 / V288)).